Reading from the N-terminus, the 161-residue chain is Putative defense protein 2 (161 aa).

Residues 1–11 (LSWSALALTSA) form the signal peptide. One can recognise a Reelin domain in the interval 12 to 161 (YPTGAPTSAC…SAPVKILSHH (150 aa)). Cysteine 21 and cysteine 98 are disulfide-bonded. An N-linked (GlcNAc...) asparagine glycan is attached at asparagine 91.

It belongs to the insect defense protein family.

It is found in the secreted. Functionally, may have antimicrobial activity. This is Putative defense protein 2 from Antheraea mylitta (Tasar silkworm).